Consider the following 198-residue polypeptide: V-type ATP synthase subunit E 1 (198 aa).

Belongs to the V-ATPase E subunit family.

In terms of biological role, produces ATP from ADP in the presence of a proton gradient across the membrane. The polypeptide is V-type ATP synthase subunit E 1 (Clostridium tetani (strain Massachusetts / E88)).